The sequence spans 356 residues: Sporulation minus regulator 1 (356 aa).

Residues H183–N199 mediate DNA binding.

This sequence to N.crassa mta-2.

It is found in the nucleus. In terms of biological role, transcriptional activator that is required for post-fertilization events. It is required for the developmental events that occur in the female organ after fertilization. The chain is Sporulation minus regulator 1 (SMR1) from Podospora anserina (Pleurage anserina).